The primary structure comprises 252 residues: 5-oxoprolinase subunit A (252 aa).

This sequence belongs to the LamB/PxpA family. In terms of assembly, forms a complex composed of PxpA, PxpB and PxpC.

It catalyses the reaction 5-oxo-L-proline + ATP + 2 H2O = L-glutamate + ADP + phosphate + H(+). Catalyzes the cleavage of 5-oxoproline to form L-glutamate coupled to the hydrolysis of ATP to ADP and inorganic phosphate. This is 5-oxoprolinase subunit A from Mycobacterium avium (strain 104).